The following is a 114-amino-acid chain: Hydrogenase maturation factor HypA (114 aa).

Histidine 2 contacts Ni(2+). Residues cysteine 73, cysteine 76, cysteine 90, and cysteine 93 each contribute to the Zn(2+) site.

Belongs to the HypA/HybF family.

Functionally, involved in the maturation of [NiFe] hydrogenases. Required for nickel insertion into the metal center of the hydrogenase. In Chloroflexus aurantiacus (strain ATCC 29366 / DSM 635 / J-10-fl), this protein is Hydrogenase maturation factor HypA.